We begin with the raw amino-acid sequence, 274 residues long: Large ribosomal subunit protein uL2cz/uL2cy (274 aa).

Disordered regions lie at residues M1–N25 and N224–K274.

Belongs to the universal ribosomal protein uL2 family. As to quaternary structure, part of the 50S ribosomal subunit.

The protein localises to the plastid. It is found in the chloroplast. The sequence is that of Large ribosomal subunit protein uL2cz/uL2cy (rpl2-A) from Aethionema cordifolium (Lebanon stonecress).